Here is a 174-residue protein sequence, read N- to C-terminus: Co-chaperone protein HscB homolog (174 aa).

Residues 2 to 74 form the J domain; that stretch reads NYFELFKFSP…IRRAEHMLSL (73 aa).

This sequence belongs to the HscB family. Interacts with HscA and stimulates its ATPase activity.

In terms of biological role, co-chaperone involved in the maturation of iron-sulfur cluster-containing proteins. Seems to help targeting proteins to be folded toward HscA. The sequence is that of Co-chaperone protein HscB homolog from Shewanella baltica (strain OS155 / ATCC BAA-1091).